The primary structure comprises 155 residues: Small ribosomal subunit protein bS6 (155 aa).

Positions 94-155 are disordered; it reads EKHEEGPSAM…RPRRPREDRV (62 aa).

It belongs to the bacterial ribosomal protein bS6 family.

Its function is as follows. Binds together with bS18 to 16S ribosomal RNA. The polypeptide is Small ribosomal subunit protein bS6 (Rhizobium johnstonii (strain DSM 114642 / LMG 32736 / 3841) (Rhizobium leguminosarum bv. viciae)).